Consider the following 56-residue polypeptide: Large ribosomal subunit protein bL33 (56 aa).

It belongs to the bacterial ribosomal protein bL33 family.

This is Large ribosomal subunit protein bL33 from Dichelobacter nodosus (strain VCS1703A).